The sequence spans 96 residues: Fluoride-specific ion channel FluC 1 (96 aa).

Transmembrane regions (helical) follow at residues 4–24 (LIQG…RLAL) and 26–46 (LWLG…AFLM). Gly-61 and Thr-64 together coordinate Na(+). A helical transmembrane segment spans residues 69-89 (MMLNDVSFYFFTAVGCILAWL).

The protein belongs to the fluoride channel Fluc/FEX (TC 1.A.43) family.

The protein resides in the cell membrane. It catalyses the reaction fluoride(in) = fluoride(out). With respect to regulation, na(+) is not transported, but it plays an essential structural role and its presence is essential for fluoride channel function. Its function is as follows. Fluoride-specific ion channel. Important for reducing fluoride concentration in the cell, thus reducing its toxicity. This Corynebacterium glutamicum (strain ATCC 13032 / DSM 20300 / JCM 1318 / BCRC 11384 / CCUG 27702 / LMG 3730 / NBRC 12168 / NCIMB 10025 / NRRL B-2784 / 534) protein is Fluoride-specific ion channel FluC 1.